Here is an 824-residue protein sequence, read N- to C-terminus: Ras guanine nucleotide exchange factor I (824 aa).

Disordered stretches follow at residues Met1 to Lys51 and Gly65 to Asp167. Positions Ser8–Ser41 are enriched in low complexity. Polar residues predominate over residues Asn83–Ser95. Low complexity predominate over residues Ser104 to Ile116. The span at Gly117–Ser128 shows a compositional bias: gly residues. Positions Ser136–Asp167 are enriched in low complexity. The 33-residue stretch at Gly223–Tyr255 folds into the LisH domain. Disordered stretches follow at residues Tyr330–Thr354 and Asn398–Thr425. Basic and acidic residues predominate over residues Val331–Lys341. A compositionally biased stretch (low complexity) spans Ser343–Thr354. A compositionally biased stretch (polar residues) spans Leu413–Thr425. One can recognise an N-terminal Ras-GEF domain in the interval Leu426–Leu551. The region spanning Asp585 to Arg816 is the Ras-GEF domain.

Functionally, promotes the exchange of Ras-bound GDP by GTP. This is Ras guanine nucleotide exchange factor I (gefI) from Dictyostelium discoideum (Social amoeba).